The sequence spans 578 residues: V-type ATP synthase alpha chain (578 aa).

228-235 (GPFGSGKT) serves as a coordination point for ATP.

This sequence belongs to the ATPase alpha/beta chains family.

It carries out the reaction ATP + H2O + 4 H(+)(in) = ADP + phosphate + 5 H(+)(out). In terms of biological role, produces ATP from ADP in the presence of a proton gradient across the membrane. The V-type alpha chain is a catalytic subunit. The sequence is that of V-type ATP synthase alpha chain from Thermus thermophilus (strain ATCC BAA-163 / DSM 7039 / HB27).